The following is a 209-amino-acid chain: FMN-dependent NADH:quinone oxidoreductase (209 aa).

FMN contacts are provided by residues serine 9 and serine 15–serine 17.

The protein belongs to the azoreductase type 1 family. As to quaternary structure, homodimer. FMN serves as cofactor.

It catalyses the reaction 2 a quinone + NADH + H(+) = 2 a 1,4-benzosemiquinone + NAD(+). The catalysed reaction is N,N-dimethyl-1,4-phenylenediamine + anthranilate + 2 NAD(+) = 2-(4-dimethylaminophenyl)diazenylbenzoate + 2 NADH + 2 H(+). Quinone reductase that provides resistance to thiol-specific stress caused by electrophilic quinones. In terms of biological role, also exhibits azoreductase activity. Catalyzes the reductive cleavage of the azo bond in aromatic azo compounds to the corresponding amines. In Bordetella bronchiseptica (strain ATCC BAA-588 / NCTC 13252 / RB50) (Alcaligenes bronchisepticus), this protein is FMN-dependent NADH:quinone oxidoreductase.